A 390-amino-acid chain; its full sequence is Phosphoglycerate kinase (390 aa).

Substrate is bound by residues 21 to 23, Arg36, 59 to 62, Arg113, and Arg146; these read DMN and HLGR. ATP contacts are provided by residues Lys197, Glu319, and 345–348; that span reads GGDT.

This sequence belongs to the phosphoglycerate kinase family. Monomer.

The protein resides in the cytoplasm. It carries out the reaction (2R)-3-phosphoglycerate + ATP = (2R)-3-phospho-glyceroyl phosphate + ADP. The protein operates within carbohydrate degradation; glycolysis; pyruvate from D-glyceraldehyde 3-phosphate: step 2/5. This is Phosphoglycerate kinase from Laribacter hongkongensis (strain HLHK9).